Consider the following 207-residue polypeptide: Large ribosomal subunit protein uL4 (207 aa).

Positions 55–75 (SAVRGGGRKPWRQKGTGRARQ) are disordered. Residues 60–71 (GGRKPWRQKGTG) show a composition bias toward basic residues.

Belongs to the universal ribosomal protein uL4 family. In terms of assembly, part of the 50S ribosomal subunit.

In terms of biological role, one of the primary rRNA binding proteins, this protein initially binds near the 5'-end of the 23S rRNA. It is important during the early stages of 50S assembly. It makes multiple contacts with different domains of the 23S rRNA in the assembled 50S subunit and ribosome. Functionally, forms part of the polypeptide exit tunnel. This chain is Large ribosomal subunit protein uL4, found in Staphylococcus epidermidis (strain ATCC 35984 / DSM 28319 / BCRC 17069 / CCUG 31568 / BM 3577 / RP62A).